We begin with the raw amino-acid sequence, 1470 residues long: Histone acetyltransferase HAC4 (1470 aa).

The segment covering 1-10 (MNNNKEVPQN) has biased composition (polar residues). 2 disordered regions span residues 1–20 (MNNN…SSSA) and 342–376 (TNFQ…HSQN). The segment covering 11–20 (SVAVSSSSSA) has biased composition (low complexity). Over residues 342 to 365 (TNFQSAPNNRDNLPQVSQQLSNHG) the composition is skewed to polar residues. The TAZ-type 1 zinc finger occupies 416–495 (GQTSSNTVLR…SISCRTCVAV (80 aa)). The interval 518-566 (SSKCQPKKSSKSRQAYKKGGAEAPSVDADLQRSIKRPKLHRPSQNITPE) is disordered. Basic residues predominate over residues 522–533 (QPKKSSKSRQAY). The PHD-type zinc-finger motif lies at 764–841 (HYVCAPCYNE…KYTCPSCYIQ (78 aa)). Positions 856–1293 (VPGATSLPVT…ILYHLHNPTA (438 aa)) constitute a CBP/p300-type HAT domain. Residues 979-981 (LDS), 998-999 (RT), and Trp1054 contribute to the acetyl-CoA site. 2 ZZ-type zinc fingers span residues 1175-1238 (HLQH…IKDV) and 1295-1347 (AFAT…SSTD). Zn(2+) is bound by residues Cys1180, Cys1183, Cys1195, Cys1198, Cys1204, Cys1207, His1220, His1228, Cys1300, Cys1303, Cys1315, Cys1318, Cys1324, Cys1327, His1335, and His1337. The segment at 1358–1436 (SQSYQVKLEK…KCTVPKCSGL (79 aa)) adopts a TAZ-type 2 zinc-finger fold.

In terms of tissue distribution, rosette leaves, stems and flowers.

The protein resides in the nucleus. It catalyses the reaction L-lysyl-[protein] + acetyl-CoA = N(6)-acetyl-L-lysyl-[protein] + CoA + H(+). In terms of biological role, acetyltransferase enzyme. Acetylates histones, giving a specific tag for transcriptional activation. The polypeptide is Histone acetyltransferase HAC4 (HAC4) (Arabidopsis thaliana (Mouse-ear cress)).